The chain runs to 229 residues: Transmembrane emp24 domain-containing protein 5 (229 aa).

The first 27 residues, Met1–Gly27, serve as a signal peptide directing secretion. Topologically, residues Phe28–Asn196 are lumenal. Residues Lys45–Leu126 form the GOLD domain. Residues Phe197–Leu217 form a helical membrane-spanning segment. Over Lys218–Thr229 the chain is Cytoplasmic.

Belongs to the EMP24/GP25L family. As to quaternary structure, interacts with TMED9 and TMED10.

The protein localises to the endoplasmic reticulum membrane. Its subcellular location is the golgi apparatus. It localises to the cis-Golgi network membrane. The protein resides in the endoplasmic reticulum-Golgi intermediate compartment membrane. In terms of biological role, potential role in vesicular protein trafficking, mainly in the early secretory pathway. Required for the maintenance of the Golgi apparatus; involved in protein exchange between Golgi stacks during assembly. Probably not required for COPI-vesicle-mediated retrograde transport. The polypeptide is Transmembrane emp24 domain-containing protein 5 (Tmed5) (Rattus norvegicus (Rat)).